The sequence spans 156 residues: Small ribosomal subunit protein uS7 (156 aa).

This sequence belongs to the universal ribosomal protein uS7 family. As to quaternary structure, part of the 30S ribosomal subunit. Contacts proteins S9 and S11.

In terms of biological role, one of the primary rRNA binding proteins, it binds directly to 16S rRNA where it nucleates assembly of the head domain of the 30S subunit. Is located at the subunit interface close to the decoding center, probably blocks exit of the E-site tRNA. The protein is Small ribosomal subunit protein uS7 of Shewanella sp. (strain ANA-3).